The following is a 238-amino-acid chain: Probable transcriptional regulatory protein YeeN (238 aa).

It belongs to the TACO1 family. YeeN subfamily.

The protein localises to the cytoplasm. The chain is Probable transcriptional regulatory protein YeeN from Shigella flexneri.